Here is a 236-residue protein sequence, read N- to C-terminus: 2-C-methyl-D-erythritol 4-phosphate cytidylyltransferase (236 aa).

This sequence belongs to the IspD/TarI cytidylyltransferase family. IspD subfamily.

The catalysed reaction is 2-C-methyl-D-erythritol 4-phosphate + CTP + H(+) = 4-CDP-2-C-methyl-D-erythritol + diphosphate. It functions in the pathway isoprenoid biosynthesis; isopentenyl diphosphate biosynthesis via DXP pathway; isopentenyl diphosphate from 1-deoxy-D-xylulose 5-phosphate: step 2/6. Functionally, catalyzes the formation of 4-diphosphocytidyl-2-C-methyl-D-erythritol from CTP and 2-C-methyl-D-erythritol 4-phosphate (MEP). This is 2-C-methyl-D-erythritol 4-phosphate cytidylyltransferase from Burkholderia thailandensis (strain ATCC 700388 / DSM 13276 / CCUG 48851 / CIP 106301 / E264).